A 178-amino-acid chain; its full sequence is Interleukin-10 (178 aa).

The first 18 residues, methionine 1–alanine 18, serve as a signal peptide directing secretion. Disulfide bonds link cysteine 30–cysteine 126 and cysteine 80–cysteine 132. An N-linked (GlcNAc...) asparagine glycan is attached at asparagine 134.

This sequence belongs to the IL-10 family. In terms of assembly, homodimer. Interacts with IL10RA and IL10RB.

The protein localises to the secreted. Its function is as follows. Major immune regulatory cytokine that acts on many cells of the immune system where it has profound anti-inflammatory functions, limiting excessive tissue disruption caused by inflammation. Mechanistically, IL10 binds to its heterotetrameric receptor comprising IL10RA and IL10RB leading to JAK1 and STAT2-mediated phosphorylation of STAT3. In turn, STAT3 translocates to the nucleus where it drives expression of anti-inflammatory mediators. Targets antigen-presenting cells (APCs) such as macrophages and monocytes and inhibits their release of pro-inflammatory cytokines including granulocyte-macrophage colony-stimulating factor /GM-CSF, granulocyte colony-stimulating factor/G-CSF, IL-1 alpha, IL-1 beta, IL-6, IL-8 and TNF-alpha. Also interferes with antigen presentation by reducing the expression of MHC-class II and co-stimulatory molecules, thereby inhibiting their ability to induce T cell activation. In addition, controls the inflammatory response of macrophages by reprogramming essential metabolic pathways including mTOR signaling. This is Interleukin-10 (IL10) from Pan troglodytes (Chimpanzee).